The following is a 356-amino-acid chain: Phosphate acyltransferase (356 aa).

It belongs to the PlsX family. Homodimer. Probably interacts with PlsY.

It localises to the cytoplasm. The catalysed reaction is a fatty acyl-[ACP] + phosphate = an acyl phosphate + holo-[ACP]. It participates in lipid metabolism; phospholipid metabolism. Functionally, catalyzes the reversible formation of acyl-phosphate (acyl-PO(4)) from acyl-[acyl-carrier-protein] (acyl-ACP). This enzyme utilizes acyl-ACP as fatty acyl donor, but not acyl-CoA. The polypeptide is Phosphate acyltransferase (Xanthobacter autotrophicus (strain ATCC BAA-1158 / Py2)).